The chain runs to 461 residues: Histone acetyltransferase KAT5 (461 aa).

A Tudor-knot domain is found at 8–65 (IEGCRLPVLRRNQDNEDEWPLAEILSVKDISGRKLFYVHYIDFNKRLDEWVTHERLDL). An N6-acetyllysine modification is found at Lys-52. Residues 70–168 (FPKKEAKTPT…RMTGSLVSDR (99 aa)) form a disordered region. A phosphoserine mark is found at Ser-86 and Ser-90. Over residues 90-100 (SPEREVKRKVE) the composition is skewed to basic and acidic residues. An N6-acetyllysine; by autocatalysis mark is found at Lys-96, Lys-98, Lys-135, and Lys-137. At Ser-147 the chain carries Phosphoserine. Positions 175 to 452 (TRMKNIECIE…IDSKCLHFTP (278 aa)) constitute an MYST-type HAT domain. Residues 208 to 233 (LYLCEFCLKYGRSLKCLQRHLTKCDL) form a C2HC MYST-type zinc finger. Lys-275 is subject to N6-acetyllysine; by autocatalysis. The interval 316 to 461 (ACILTLPPYQ…PKDWSKRGKW (146 aa)) is interaction with ATF2. Acetyl-CoA contacts are provided by residues 318–320 (ILT) and 325–331 (QRRGYGK). Glu-351 acts as the Proton donor/acceptor in catalysis. Acetyl-CoA is bound by residues Ser-355 and Ser-364. Lys-378 participates in a covalent cross-link: Glycyl lysine isopeptide (Lys-Gly) (interchain with G-Cter in SUMO1); alternate. Residue Lys-378 forms a Glycyl lysine isopeptide (Lys-Gly) (interchain with G-Cter in SUMO2); alternate linkage. Residue Lys-399 forms a Glycyl lysine isopeptide (Lys-Gly) (interchain with G-Cter in SUMO1) linkage.

Belongs to the MYST (SAS/MOZ) family. In terms of assembly, component of the NuA4 histone acetyltransferase complex which contains the catalytic subunit KAT5/TIP60 and the subunits EP400, TRRAP/PAF400, BRD8/SMAP, EPC1, DMAP1/DNMAP1, RUVBL1/TIP49, RUVBL2, ING3, actin, ACTL6A/BAF53A, MORF4L1/MRG15, MORF4L2/MRGX, MRGBP, YEATS4/GAS41, VPS72/YL1 and MEAF6. KAT5/TIP60, EPC1, and ING3 together constitute a minimal HAT complex termed Piccolo NuA4. The NuA4 complex interacts with MYC. Interacts with ATM. Interacts with JADE1. Interacts with PLA2G4A/CPLA2, EDNRA and HDAC7. Interacts with the cytoplasmic tail of APP and APBB1/FE65. Interacts with TRIM24 and TRIM68. Forms a complex with SENP6 and UBE2I in response to UV irradiation. Identified in a complex with HINT1. Interacts with ATF2 and CUL3. Interacts with NR1D2 (via N-terminus). Component of a SWR1-like complex. Interacts with FOXP3. Interacts with ZBTB49. Interacts with SRF. Interacts with ATF3; promoting autoacetylation and deubiquitination by USP7. Interacts with EP300/p300; interaction promotes KAT5 autoacetylation. Interacts with PRKDC; interaction is impaired following KAT5 sumoylation. Interacts with GPR50. Post-translationally, phosphorylated on Ser-86 and Ser-90; enhanced during G2/M phase. The phosphorylated form has a higher activity. Phosphorylation at Ser-90 by CDK1 or CDK9 is a prerequisite for phosphorylation at Ser-86 by GSK3. Phosphorylation at Ser-86 by GSK3 (GSK3A or GSK3B) activates acetyltransferase and acyltransferase activities. Phosphorylation at Ser-90 by CDK9 promotes KAT5 recruitment to chromatin. Phosphorylation by VRK1 following DNA damage promotes KAT5 association with chromatin and histone acetyltransferase activity. Autoacetylated. Autoacetylation is required for histone acetyltransferase activity. Autoacetylation at Lys-275 is facilitated by interaction with EP300/p300: it prevents ubiquitination and subsequent degradation by the proteasome and promotes acetylation of target proteins. Deacetylated by HDAC3 and SIRT1. Deacetylation by HDAC3 promotes its ubiquitination and cytoplasmic localization. In terms of processing, sumoylated by UBE2I at Lys-378 and Lys-399, leading to increase of its histone acetyltransferase activity in UV-induced DNA damage response, as well as its translocation to nuclear bodies. Sumoylation with SUMO2 by PIAS4 at Lys-378 promotes repair of DNA double-strand breaks (DSBs) via homologous recombination (HR). Sumoylation by PIAS4 impairs interaction with PRKDC, inhibiting non-homologous end joining (NHEJ)-mediated repair of DSBs, thereby facilitating HR. Desumoylated by SENP3. Post-translationally, ubiquitinated by MDM2, leading to its proteasome-dependent degradation. Ubiquitination is prevented by autoacetylation at Lys-275. Ubiquitinated following deacetylation by HDAC3, leading to cytoplasmic localization. Deubiquitinated by USP7 following interaction with ATF3, promoting its stabilization.

The protein resides in the nucleus. The protein localises to the chromosome. It is found in the cytoplasm. It localises to the centromere. Its subcellular location is the kinetochore. The protein resides in the cytoskeleton. The protein localises to the spindle pole. It is found in the nucleolus. It localises to the perinuclear region. The catalysed reaction is L-lysyl-[histone] + acetyl-CoA = N(6)-acetyl-L-lysyl-[histone] + CoA + H(+). It catalyses the reaction L-lysyl-[protein] + acetyl-CoA = N(6)-acetyl-L-lysyl-[protein] + CoA + H(+). The enzyme catalyses (2E)-butenoyl-CoA + L-lysyl-[protein] = N(6)-(2E)-butenoyl-L-lysyl-[protein] + CoA + H(+). It carries out the reaction 2-hydroxyisobutanoyl-CoA + L-lysyl-[protein] = N(6)-(2-hydroxyisobutanoyl)-L-lysyl-[protein] + CoA + H(+). The catalysed reaction is (S)-lactoyl-CoA + L-lysyl-[protein] = N(6)-[(S)-lactoyl]-L-lysyl-[protein] + CoA + H(+). Its activity is regulated as follows. Acyltransferase and acetyltransferase activities are activated by phosphorylation and autoacetylation. Autoacetylation activates the histone acetyltransferase activity. Its function is as follows. Catalytic subunit of the NuA4 histone acetyltransferase complex, a multiprotein complex involved in transcriptional activation of select genes principally by acetylation of nucleosomal histones H2A and H4. Histone acetylation alters nucleosome-DNA interactions and promotes interaction of the modified histones with other proteins which positively regulate transcription. The NuA4 histone acetyltransferase complex is required for the activation of transcriptional programs associated with proto-oncogene mediated growth induction, tumor suppressor mediated growth arrest and replicative senescence, apoptosis, and DNA repair. The NuA4 complex plays a direct role in repair of DNA double-strand breaks (DSBs) by promoting homologous recombination (HR): the complex inhibits TP53BP1 binding to chromatin via MBTD1, which recognizes and binds histone H4 trimethylated at 'Lys-20' (H4K20me), and KAT5 that catalyzes acetylation of 'Lys-15' of histone H2A (H2AK15ac), thereby blocking the ubiquitination mark required for TP53BP1 localization at DNA breaks. Also involved in DSB repair by mediating acetylation of 'Lys-5' of histone H2AX (H2AXK5ac), promoting NBN/NBS1 assembly at the sites of DNA damage. The NuA4 complex plays a key role in hematopoietic stem cell maintenance and is required to maintain acetylated H2A.Z/H2AZ1 at MYC target genes. The NuA4 complex is also required for spermatid development by promoting acetylation of histones: histone hyperacetylation is required for histone replacement during the transition from round to elongating spermatids. Component of a SWR1-like complex that specifically mediates the removal of histone H2A.Z/H2AZ1 from the nucleosome. Also acetylates non-histone proteins, such as BMAL1, ATM, AURKB, CHKA, CGAS, ERCC4/XPF, LPIN1, TP53/p53, NDC80/HEC1, NR1D2, RAN, SOX4, FOXP3, SQSTM1, ULK1 and RUBCNL/Pacer. Directly acetylates and activates ATM. Promotes nucleotide excision repair (NER) by mediating acetylation of ERCC4/XPF, thereby promoting formation of the ERCC4-ERCC1 complex. Relieves NR1D2-mediated inhibition of APOC3 expression by acetylating NR1D2. Acts as a regulator of regulatory T-cells (Treg) by catalyzing FOXP3 acetylation, thereby promoting FOXP3 transcriptional repressor activity. Involved in skeletal myoblast differentiation by mediating acetylation of SOX4. Catalyzes acetylation of APBB1/FE65, increasing its transcription activator activity. Promotes transcription elongation during the activation phase of the circadian cycle by catalyzing acetylation of BMAL1, promoting elongation of circadian transcripts. Together with GSK3 (GSK3A or GSK3B), acts as a regulator of autophagy: phosphorylated at Ser-86 by GSK3 under starvation conditions, leading to activate acetyltransferase activity and promote acetylation of key autophagy regulators, such as ULK1 and RUBCNL/Pacer. Acts as a regulator of the cGAS-STING innate antiviral response by catalyzing acetylation the N-terminus of CGAS, thereby promoting CGAS DNA-binding and activation. Also regulates lipid metabolism by mediating acetylation of CHKA or LPIN1. Promotes lipolysis of lipid droplets following glucose deprivation by mediating acetylation of isoform 1 of CHKA, thereby promoting monomerization of CHKA and its conversion into a tyrosine-protein kinase. Acts as a regulator of fatty-acid-induced triacylglycerol synthesis by catalyzing acetylation of LPIN1, thereby promoting the synthesis of diacylglycerol. In addition to protein acetyltransferase, can use different acyl-CoA substrates, such as (2E)-butenoyl-CoA (crotonyl-CoA), S-lactoyl-CoA (lactyl-CoA) and 2-hydroxyisobutanoyl-CoA (2-hydroxyisobutyryl-CoA), and is able to mediate protein crotonylation, lactylation and 2-hydroxyisobutyrylation, respectively. Acts as a key regulator of chromosome segregation and kinetochore-microtubule attachment during mitosis by mediating acetylation or crotonylation of target proteins. Catalyzes acetylation of AURKB at kinetochores, increasing AURKB activity and promoting accurate chromosome segregation in mitosis. Acetylates RAN during mitosis, promoting microtubule assembly at mitotic chromosomes. Acetylates NDC80/HEC1 during mitosis, promoting robust kinetochore-microtubule attachment. Catalyzes crotonylation of MAPRE1/EB1, thereby ensuring accurate spindle positioning in mitosis. Catalyzes lactylation of NBN/NBS1 in response to DNA damage, thereby promoting DNA double-strand breaks (DSBs) via homologous recombination (HR). This is Histone acetyltransferase KAT5 from Pongo abelii (Sumatran orangutan).